A 347-amino-acid chain; its full sequence is MRLAVIPGDGIGPEVVAEALKVLGEVVPDTEITRYDLGAARWHATGELLPESVLGELRQHDAILLGAVGDPSVPSGILERGLLLRLRFELDHHVNLRPARLYPGVKSPVSDPGEIDMVVVREGTEGPYAGNGGLLRKDTTHEIATEVSINTAFGVERVVRDAFARAASRPRKHLTLVHKTNVLTHAGSLWSRVVEEVSLQHPDVTVAYQHVDATTIHMVTDPSRFDVIVTDNLFGDIITDLAGAITGGIGLAASGNIDATRRNPSMFEPVHGSAPDIAGQGTADPTAAVLSVALLLDHVGQSEAARRVEAAVAFDLATRDHSAPGATFAIGDRLAALVSSREVAQQA.

Substrate-binding residues include R87, R97, R121, and D212. Mg(2+) is bound by residues D212, D236, and D240. 272–284 (GSAPDIAGQGTAD) is a binding site for NAD(+).

This sequence belongs to the isocitrate and isopropylmalate dehydrogenases family. LeuB type 2 subfamily. In terms of assembly, homodimer. Mg(2+) serves as cofactor. The cofactor is Mn(2+).

It is found in the cytoplasm. The enzyme catalyses (2R,3S)-3-isopropylmalate + NAD(+) = 4-methyl-2-oxopentanoate + CO2 + NADH. Its pathway is amino-acid biosynthesis; L-leucine biosynthesis; L-leucine from 3-methyl-2-oxobutanoate: step 3/4. Functionally, catalyzes the oxidation of 3-carboxy-2-hydroxy-4-methylpentanoate (3-isopropylmalate) to 3-carboxy-4-methyl-2-oxopentanoate. The product decarboxylates to 4-methyl-2 oxopentanoate. This Saccharopolyspora erythraea (strain ATCC 11635 / DSM 40517 / JCM 4748 / NBRC 13426 / NCIMB 8594 / NRRL 2338) protein is 3-isopropylmalate dehydrogenase.